Reading from the N-terminus, the 67-residue chain is Large ribosomal subunit protein bL35 (67 aa).

It belongs to the bacterial ribosomal protein bL35 family.

This Agrobacterium fabrum (strain C58 / ATCC 33970) (Agrobacterium tumefaciens (strain C58)) protein is Large ribosomal subunit protein bL35.